The following is a 518-amino-acid chain: Protein translocase subunit SecD (518 aa).

6 helical membrane passes run 9–29 (IFLS…NFMQ), 361–381 (LIGF…LGLF), 384–404 (IALS…QATL), 406–426 (LPGI…NVLI), 452–474 (FATI…IFGV), and 486–506 (IGII…IDIW).

It belongs to the SecD/SecF family. SecD subfamily. As to quaternary structure, forms a complex with SecF. Part of the essential Sec protein translocation apparatus which comprises SecA, SecYEG and auxiliary proteins SecDF-YajC and YidC.

It localises to the cell inner membrane. Part of the Sec protein translocase complex. Interacts with the SecYEG preprotein conducting channel. SecDF uses the proton motive force (PMF) to complete protein translocation after the ATP-dependent function of SecA. This chain is Protein translocase subunit SecD, found in Rickettsia felis (strain ATCC VR-1525 / URRWXCal2) (Rickettsia azadi).